Here is a 215-residue protein sequence, read N- to C-terminus: MADS-box transcription factor 4 (215 aa).

The MADS-box domain maps to Met1–Lys61. The region spanning His89–Glu175 is the K-box domain.

May interact with the K-box of MADS16. Highly expressed in lodicules, at intermediate levels in stamens, and weakly in carpels. Expressed in pollen.

The protein localises to the nucleus. In terms of biological role, probable transcription factor involved in the development of floral organs. B-class protein required for normal development of lodicules and stamens (whorls 2 and 3). May function as a heterodimer with MADS16. The sequence is that of MADS-box transcription factor 4 (MADS4) from Oryza sativa subsp. japonica (Rice).